We begin with the raw amino-acid sequence, 382 residues long: Dual-specificity RNA methyltransferase RlmN (382 aa).

E91 serves as the catalytic Proton acceptor. The 243-residue stretch at 97-339 folds into the Radical SAM core domain; it reads ETDRGTLCIS…TTVRKTRGDD (243 aa). Cysteines 104 and 344 form a disulfide. Positions 111, 115, and 118 each coordinate [4Fe-4S] cluster. S-adenosyl-L-methionine contacts are provided by residues 165–166, S197, 219–221, and N301; these read GE and SLH. The active-site S-methylcysteine intermediate is the C344.

The protein belongs to the radical SAM superfamily. RlmN family. [4Fe-4S] cluster serves as cofactor.

The protein resides in the cytoplasm. The catalysed reaction is adenosine(2503) in 23S rRNA + 2 reduced [2Fe-2S]-[ferredoxin] + 2 S-adenosyl-L-methionine = 2-methyladenosine(2503) in 23S rRNA + 5'-deoxyadenosine + L-methionine + 2 oxidized [2Fe-2S]-[ferredoxin] + S-adenosyl-L-homocysteine. The enzyme catalyses adenosine(37) in tRNA + 2 reduced [2Fe-2S]-[ferredoxin] + 2 S-adenosyl-L-methionine = 2-methyladenosine(37) in tRNA + 5'-deoxyadenosine + L-methionine + 2 oxidized [2Fe-2S]-[ferredoxin] + S-adenosyl-L-homocysteine. Specifically methylates position 2 of adenine 2503 in 23S rRNA and position 2 of adenine 37 in tRNAs. m2A2503 modification seems to play a crucial role in the proofreading step occurring at the peptidyl transferase center and thus would serve to optimize ribosomal fidelity. In Polaromonas naphthalenivorans (strain CJ2), this protein is Dual-specificity RNA methyltransferase RlmN.